The sequence spans 105 residues: Ketoisovalerate oxidoreductase subunit VorD (105 aa).

4Fe-4S ferredoxin-type domains follow at residues 44 to 73 (FMPV…IKED) and 74 to 103 (GFVA…MVRE). Residues Cys-53, Cys-56, Cys-59, Cys-63, Cys-83, Cys-86, Cys-89, and Cys-93 each coordinate [4Fe-4S] cluster.

Heterotetramer of one alpha, one beta, one delta and one gamma chain. It depends on [4Fe-4S] cluster as a cofactor.

The catalysed reaction is 3-methyl-2-oxobutanoate + 2 oxidized [2Fe-2S]-[ferredoxin] + CoA = 2-methylpropanoyl-CoA + 2 reduced [2Fe-2S]-[ferredoxin] + CO2 + H(+). This Pyrococcus abyssi (strain GE5 / Orsay) protein is Ketoisovalerate oxidoreductase subunit VorD (vorD).